The primary structure comprises 514 residues: Probable drug/proton antiporter YHK8 (514 aa).

The Cytoplasmic portion of the chain corresponds to 1-74 (MVAEFQIASA…RHMSTARRYY (74 aa)). Residues 75-95 (ISSLITFTSMVITMISSSWTL) form a helical membrane-spanning segment. Topologically, residues 96-111 (PSTHIIEHFHISHEVS) are extracellular. The helical transmembrane segment at 112–132 (TLGITLYVFGLGIGPLFLSPL) threads the bilayer. Topologically, residues 133-141 (SELYGRRIT) are cytoplasmic. Residues 142–162 (FLYALTLSIIWQCLTIWSKTI) traverse the membrane as a helical segment. Residues 163–170 (TGVMFGRF) are Extracellular-facing. The chain crosses the membrane as a helical span at residues 171 to 191 (LSGFFGSAFLSVAGGAIADIF). The Cytoplasmic segment spans residues 192–200 (DKDQIGIPM). A helical transmembrane segment spans residues 201 to 221 (AIYTTSAFLGPSLGPIIGGAL). The Extracellular segment spans residues 222–227 (YHQSYK). Residues 228 to 248 (WTFITLLITSGCCLVMIIFTI) traverse the membrane as a helical segment. Residues 249–307 (PETYKPMLLIRKAKRLRKEKNDQRYYAVLEVTREQTSLLSAIFLSTKRPFGLLLRDRMM) lie on the Cytoplasmic side of the membrane. A helical membrane pass occupies residues 308–328 (GVLCFYTGLELAIIYLYFVAF). Topologically, residues 329 to 342 (PYVFKKLYNFGPME) are extracellular. Residues 343-363 (IACSYIGIMVGMILSAPTCLL) traverse the membrane as a helical segment. At 364-386 (FQKTFEWRVKRNNGVKTPEMRFE) the chain is on the cytoplasmic side. The chain crosses the membrane as a helical span at residues 387 to 407 (PLFYGAFLTPVGLFIFAFTCY). Topologically, residues 408–412 (KHVHW) are extracellular. The chain crosses the membrane as a helical span at residues 413–433 (IAPIIGSAIFGSGVYFVFTGV). Topologically, residues 434–447 (FAYTVDAYRRYAAS) are cytoplasmic. The chain crosses the membrane as a helical span at residues 448–468 (GMACNTFVRCIMAGVFPLFGL). The Extracellular segment spans residues 469 to 477 (QMYKSMGVN). The chain crosses the membrane as a helical span at residues 478 to 498 (WAGFLLAMVTVAMIPVPFLFT). The Cytoplasmic segment spans residues 499–514 (KYGARLRAKSPYAWDD).

This sequence belongs to the major facilitator superfamily. CAR1 family.

It localises to the membrane. Functionally, probable drug/proton antiporter. The polypeptide is Probable drug/proton antiporter YHK8 (YHK8) (Saccharomyces cerevisiae (strain ATCC 204508 / S288c) (Baker's yeast)).